Here is a 242-residue protein sequence, read N- to C-terminus: Neuromodulin (242 aa).

The segment at 1-242 (MLCCMRRTKQ…EEREADQEHA (242 aa)) is disordered. 2 S-palmitoyl cysteine lipidation sites follow: cysteine 3 and cysteine 4. Basic and acidic residues predominate over residues 9-32 (KQVEKNDEDQKIEQDGIKPEDKAH). The IQ domain occupies 31–60 (AHKAATKIQASFRGHITRKKLKGEKKGDAP). Serine 41 carries the phosphoserine; by PHK and PKC modification. Residues 66 to 84 (ANEKDEAAVAEGTEKKEGE) show a composition bias toward basic and acidic residues. Residues 85-97 (GSTPAEAAPGAGP) are compositionally biased toward low complexity. Serine 86 carries the phosphoserine modification. The segment covering 98-118 (KPEEKTGKAGETPSEEKKGEG) has biased composition (basic and acidic residues). The segment covering 119–134 (APDAATEQAAPQAPAP) has biased composition (low complexity). The segment covering 143 to 158 (ETESATKASTDNSPSS) has biased composition (polar residues). Serine 155, serine 157, and serine 158 each carry phosphoserine. Residues 159–171 (KAEDAPAKEEPKQ) show a composition bias toward basic and acidic residues. The segment covering 172–204 (ADVPAAVTAAAATAPAAEDAAAMATAQPPTETA) has biased composition (low complexity). Serine 206 and serine 207 each carry phosphoserine; by CK2. A compositionally biased stretch (basic and acidic residues) spans 209 to 242 (AEEKIEAVDETKPKDSARQDEGKGEEREADQEHA).

This sequence belongs to the neuromodulin family. As to quaternary structure, identified in a complex containing FGFR4, NCAM1, CDH2, PLCG1, FRS2, SRC, SHC1, GAP43 and CTTN. Interacts (via IQ domain) with calmodulin. Binds calmodulin with a greater affinity in the absence of Ca(2+) than in its presence. In terms of processing, phosphorylated. Phosphorylation of this protein by a protein kinase C is specifically correlated with certain forms of synaptic plasticity. Post-translationally, palmitoylated by ZDHHC3. Palmitoylation is regulated by ARF6 and is essential for plasma membrane association and axonal and dendritic filopodia induction. Deacylated by LYPLA2.

It is found in the cell membrane. The protein localises to the cell projection. The protein resides in the growth cone membrane. Its subcellular location is the synapse. It localises to the filopodium membrane. It is found in the perikaryon. The protein localises to the dendrite. The protein resides in the axon. Its subcellular location is the cytoplasm. Functionally, this protein is associated with nerve growth. It is a major component of the motile 'growth cones' that form the tips of elongating axons. Plays a role in axonal and dendritic filopodia induction. This chain is Neuromodulin (GAP43), found in Bos taurus (Bovine).